Here is a 211-residue protein sequence, read N- to C-terminus: Peptidyl-prolyl cis-trans isomerase FKBP14 (211 aa).

The N-terminal stretch at 1 to 19 (MRLFLWNAVLTLFVTSLIG) is a signal peptide. Residues C38 and C96 are joined by a disulfide bond. The PPIase FKBP-type domain occupies 45–135 (GDLMLVHYEG…IFNIDLLEIR (91 aa)). In terms of domain architecture, EF-hand 1 spans 135–170 (RNGPRSHESFQEMDLNDDWKLSKDEVKAYLKKEFEK). Ca(2+) is bound by residues D148, N150, D152, K154, and E159. The N-linked (GlcNAc...) asparagine glycan is linked to N176. The EF-hand 2 domain maps to 179–211 (HHDALVEDIFDKEDEDKDGFISAREFTYKHDEL). Positions 192, 194, 196, 198, and 203 each coordinate Ca(2+). A Prevents secretion from ER motif is present at residues 208–211 (HDEL).

As to quaternary structure, monomer. Homodimer. Interacts with type III, type IV and type X collagens.

It localises to the endoplasmic reticulum lumen. The enzyme catalyses [protein]-peptidylproline (omega=180) = [protein]-peptidylproline (omega=0). Inhibited by tacrolimus/FK506. In terms of biological role, PPIase which accelerates the folding of proteins during protein synthesis. Has a preference for substrates containing 4-hydroxylproline modifications, including type III collagen. May also target type VI and type X collagens. This chain is Peptidyl-prolyl cis-trans isomerase FKBP14 (FKBP14), found in Homo sapiens (Human).